We begin with the raw amino-acid sequence, 87 residues long: MQKYRRRNTVAFTVLAYFTFFAGVFLFSIGLYNADNLELNEKGYYIAVMILVAVGAILTQKVTRDNAEDNEIIAEQEKRQNQSHIES.

Helical transmembrane passes span 10-30 and 43-63; these read VAFTVLAYFTFFAGVFLFSIG and GYYIAVMILVAVGAILTQKVT.

The protein resides in the cell membrane. This is an uncharacterized protein from Bacillus subtilis (strain 168).